The chain runs to 74 residues: Small integral membrane protein 15 (74 aa).

Residues 20–40 form a helical membrane-spanning segment; the sequence is YGFLTTVILVLTPLFIISAAL. Residues 48–74 are a coiled coil; sequence IETREREQKKKRKRQENIVKAKRAKKD. The segment at 53–74 is disordered; that stretch reads REQKKKRKRQENIVKAKRAKKD. The span at 56 to 74 shows a compositional bias: basic residues; the sequence is KKKRKRQENIVKAKRAKKD.

It belongs to the SMIM15 family.

It localises to the membrane. This chain is Small integral membrane protein 15 (SMIM15), found in Gallus gallus (Chicken).